The primary structure comprises 95 residues: Parvalbumin alpha (95 aa).

Ser-19 bears the Phosphoserine mark. 2 EF-hand domains span residues 34–69 and 73–95; these read KNRE…FSAD and LSDT…KIGA. Ca(2+)-binding residues include Asp-47, Asp-49, Ser-51, Phe-53, Glu-55, Glu-58, Asp-86, Asp-88, Asp-90, and Lys-92.

It belongs to the parvalbumin family.

In terms of biological role, in muscle, parvalbumin is thought to be involved in relaxation after contraction. It binds two calcium ions. The protein is Parvalbumin alpha (PVALB) of Cavia porcellus (Guinea pig).